The primary structure comprises 257 residues: ATP synthase subunit a (257 aa).

A propeptide spans 1 to 4 (MFIT) (removed in mature form). Helical transmembrane passes span 27-47 (FSNFGFYLGLSALIAISLAII), 58-78 (IVPQKFGIAMEAIYFTMLNLV), 93-113 (YFPFIWSLFVLILFSNLLRLI), 122-142 (QLIFTLGLSISILIGATILGL), 149-169 (VFGLFLPSGTPTPLIPLLVLI), 189-209 (IIAGHLTMSILGGLIFTFMGL), 214-234 (FIIGFLPITVLVAISLLEFGI), and 236-256 (FIQAYVFAILTCGFINDSLNL).

This sequence belongs to the ATPase A chain family. In terms of assembly, F-type ATPases have 2 components, CF(1) - the catalytic core - and CF(0) - the membrane proton channel. CF(1) has five subunits: alpha(3), beta(3), gamma(1), delta(1), epsilon(1). CF(0) has three main subunits: a, b and c.

The protein resides in the mitochondrion inner membrane. Functionally, mitochondrial membrane ATP synthase (F(1)F(0) ATP synthase or Complex V) produces ATP from ADP in the presence of a proton gradient across the membrane which is generated by electron transport complexes of the respiratory chain. F-type ATPases consist of two structural domains, F(1) - containing the extramembraneous catalytic core and F(0) - containing the membrane proton channel, linked together by a central stalk and a peripheral stalk. During catalysis, ATP synthesis in the catalytic domain of F(1) is coupled via a rotary mechanism of the central stalk subunits to proton translocation. Key component of the proton channel; it may play a direct role in the translocation of protons across the membrane. This is ATP synthase subunit a (atp6) from Schizosaccharomyces pombe (strain 972 / ATCC 24843) (Fission yeast).